The primary structure comprises 473 residues: 3-isopropylmalate dehydratase large subunit (473 aa).

[4Fe-4S] cluster-binding residues include Cys354, Cys414, and Cys417.

This sequence belongs to the aconitase/IPM isomerase family. LeuC type 1 subfamily. In terms of assembly, heterodimer of LeuC and LeuD. Requires [4Fe-4S] cluster as cofactor.

The enzyme catalyses (2R,3S)-3-isopropylmalate = (2S)-2-isopropylmalate. It participates in amino-acid biosynthesis; L-leucine biosynthesis; L-leucine from 3-methyl-2-oxobutanoate: step 2/4. Its function is as follows. Catalyzes the isomerization between 2-isopropylmalate and 3-isopropylmalate, via the formation of 2-isopropylmaleate. The chain is 3-isopropylmalate dehydratase large subunit from Mycobacterium ulcerans (strain Agy99).